A 543-amino-acid chain; its full sequence is MAAKQVLFSDEARAKMLDGVNTLANAVKVTLGPKGRNVVLDKAYGAPTITKDGVSVAKEIELEDKFENMGAQIVKEVASKTADVAGDGTTTATVLAQALLTEGLKAVAAGMNPMDLKRGIDKAAAKLVEELKVLSKPCSDTKSIEQVGTISANSDSTVGKLIAEAMAKVGKEGVITVEEGKGFEDELDVVEGMQFDRGYLSPYFATNQENMTTDLESPYILLVDKKISNIRELLPVLEGVSKSGKALLIIAEDVESEALATLVVNNMRGVVKVCAVKAPGFGDRRKAMLEDIAILTGATVISEDLGMKLEEANMEHLGTASRVQVSKDDTTIIDGAGNKDAIVNRVNQLKANVAEATSDYDKEKLQERLAKLSGGVAVIRVGAVTEAEMKEKKDRVDDALHATRAAVEEGIVAGGGVALIRAQKALDGLVGDNDDQNHGIALLKKAIEAPLRQIVSNAGGESSVVVNEVKAKEGNYGYNAANDTYGDMVEMGILDPTKVTRSALQHAASIAGLMITTEAMVAEIKEDAPAMPMGGMGGMPGMM.

Residues 30–33 (TLGP), Lys51, 87–91 (DGTTT), Gly415, 479–481 (NAA), and Asp495 each bind ATP.

This sequence belongs to the chaperonin (HSP60) family. In terms of assembly, forms a cylinder of 14 subunits composed of two heptameric rings stacked back-to-back. Interacts with the co-chaperonin GroES.

It localises to the cytoplasm. It catalyses the reaction ATP + H2O + a folded polypeptide = ADP + phosphate + an unfolded polypeptide.. In terms of biological role, together with its co-chaperonin GroES, plays an essential role in assisting protein folding. The GroEL-GroES system forms a nano-cage that allows encapsulation of the non-native substrate proteins and provides a physical environment optimized to promote and accelerate protein folding. The sequence is that of Chaperonin GroEL from Francisella philomiragia subsp. philomiragia (strain ATCC 25017 / CCUG 19701 / FSC 153 / O#319-036).